Here is a 37-residue protein sequence, read N- to C-terminus: Cytochrome b6-f complex subunit 5 (37 aa).

The chain crosses the membrane as a helical span at residues 5–25; that stretch reads SLFGIVLGLIPITLAGLFVTA.

The protein belongs to the PetG family. As to quaternary structure, the 4 large subunits of the cytochrome b6-f complex are cytochrome b6, subunit IV (17 kDa polypeptide, PetD), cytochrome f and the Rieske protein, while the 4 small subunits are PetG, PetL, PetM and PetN. The complex functions as a dimer.

The protein resides in the plastid. It localises to the chloroplast thylakoid membrane. Functionally, component of the cytochrome b6-f complex, which mediates electron transfer between photosystem II (PSII) and photosystem I (PSI), cyclic electron flow around PSI, and state transitions. PetG is required for either the stability or assembly of the cytochrome b6-f complex. The protein is Cytochrome b6-f complex subunit 5 of Arabis hirsuta (Hairy rock-cress).